The sequence spans 169 residues: Transcription antitermination protein NusB (169 aa).

Residues Ala-150–Ser-169 form a disordered region.

Belongs to the NusB family.

In terms of biological role, involved in transcription antitermination. Required for transcription of ribosomal RNA (rRNA) genes. Binds specifically to the boxA antiterminator sequence of the ribosomal RNA (rrn) operons. This is Transcription antitermination protein NusB from Rhodococcus jostii (strain RHA1).